An 86-amino-acid chain; its full sequence is Conotoxin S6.10 (86 aa).

An N-terminal signal peptide occupies residues 1–22; it reads MKLTCVLIIAVLFLTACQLATA. Positions 23 to 45 are excised as a propeptide; it reads KTYSKGRQKHRALRSTDKNIKLT. 3 cysteine pairs are disulfide-bonded: Cys48-Cys62, Cys55-Cys66, and Cys61-Cys73.

Belongs to the conotoxin O1 superfamily. Expressed by the venom duct.

It is found in the secreted. This is Conotoxin S6.10 from Conus striatus (Striated cone).